Reading from the N-terminus, the 284-residue chain is MKIVLISGLSGSGKSVALRQMEDLGYFCVDNLPLEMLPSLVSYHIERADETELAVSVDVRSGIDIAQAREQIAYLRGLGHRVEVLFVEAEEAVLVRRFSETRRGHPLSNQDMTLLESLKKEREWLFPLKEIAYCIDTSKMNAQQLRHAVRQWLKVERTGLLVVLESFGFKYGVPNNADFMFDMRSLPNPYYDPELRPYTGMDKPVWDYLDGQPLAQEMVDGIERFVTRWLPRLEDESRSYVTVAIGCTGGQHRSVYIVEKLARRLKGRYELLIRHRQAQNLSGR.

8–15 (GLSGSGKS) is an ATP binding site. 58–61 (DVRS) contacts GTP.

Belongs to the RapZ-like family.

In terms of biological role, displays ATPase and GTPase activities. The polypeptide is Nucleotide-binding protein NGK_0463 (Neisseria gonorrhoeae (strain NCCP11945)).